The following is a 1235-amino-acid chain: Myosin-1 (1235 aa).

The interval methionine 1–aspartate 34 is disordered. A compositionally biased stretch (basic and acidic residues) spans aspartate 9–glycine 19. Residues isoleucine 41 to aspartate 715 form the Myosin motor domain. Residue glycine 134–threonine 141 coordinates ATP. Residues serine 405 to alanine 487 form an actin-binding region. IQ domains are found at residues histidine 719–alanine 739 and alanine 740–lysine 765. The region spanning arginine 773–proline 962 is the TH1 domain. Disordered regions lie at residues tyrosine 949–proline 1076 and alanine 1135–tryptophan 1235. Low complexity predominate over residues lysine 982–alanine 1046. A compositionally biased stretch (polar residues) spans proline 1050–valine 1062. Over residues arginine 1063–alanine 1073 the composition is skewed to pro residues. Residues lysine 1075–proline 1134 form the SH3 domain. Over residues alanine 1135 to alanine 1150 the composition is skewed to pro residues. Polar residues predominate over residues serine 1180–isoleucine 1210.

The protein belongs to the TRAFAC class myosin-kinesin ATPase superfamily. Myosin family.

It localises to the cytoplasm. The protein localises to the cytoskeleton. It is found in the actin patch. Type-I myosin implicated in the organization of the actin cytoskeleton. Required for proper actin cytoskeleton polarization. At the cell cortex, assembles in patch-like structures together with proteins from the actin-polymerizing machinery and promotes actin assembly. Functions as actin nucleation-promoting factor (NPF) for the Arp2/3 complex. The chain is Myosin-1 (myo-1) from Neurospora crassa (strain ATCC 24698 / 74-OR23-1A / CBS 708.71 / DSM 1257 / FGSC 987).